A 165-amino-acid polypeptide reads, in one-letter code: Nucleotide-binding protein PMN2A_1813 (165 aa).

It belongs to the YajQ family.

Nucleotide-binding protein. The sequence is that of Nucleotide-binding protein PMN2A_1813 from Prochlorococcus marinus (strain NATL2A).